The chain runs to 212 residues: Root-specific lectin (212 aa).

The signal sequence occupies residues 1–26 (MKMMSTRALALGAAAVLAFAAATAHA). A Pyrrolidone carboxylic acid modification is found at glutamine 27. 4 consecutive Chitin-binding type-1 domains span residues 27–68 (QRCG…ACYT), 69–111 (SKRC…PCRA), 112–154 (DIKC…ACST), and 155–197 (DKPC…GCDG). 16 disulfides stabilise this stretch: cysteine 29-cysteine 44, cysteine 38-cysteine 50, cysteine 43-cysteine 57, cysteine 61-cysteine 66, cysteine 72-cysteine 87, cysteine 81-cysteine 93, cysteine 86-cysteine 100, cysteine 104-cysteine 109, cysteine 115-cysteine 130, cysteine 124-cysteine 136, cysteine 129-cysteine 143, cysteine 147-cysteine 152, cysteine 158-cysteine 173, cysteine 167-cysteine 179, cysteine 172-cysteine 186, and cysteine 190-cysteine 195. A substrate-binding site is contributed by 36–38 (MEC). Substrate is bound at residue 88-99 (SQWGYCGFGAEY). 140 to 141 (SE) serves as a coordination point for substrate. N-linked (GlcNAc...) asparagine glycosylation is present at asparagine 206.

In terms of tissue distribution, in roots.

In terms of biological role, carbohydrate binding. This Hordeum vulgare (Barley) protein is Root-specific lectin.